The sequence spans 183 residues: Putative NAD(P)H nitroreductase YdjA (183 aa).

FMN-binding positions include 10-12 (RRS), Arg35, and His39. 121-126 (AAVAQG) is a binding site for NAD(+). Residue 131–133 (WRS) participates in FMN binding.

Belongs to the nitroreductase family. In terms of assembly, homodimer. The cofactor is FMN.

The sequence is that of Putative NAD(P)H nitroreductase YdjA (ydjA) from Escherichia coli O157:H7.